The sequence spans 354 residues: 3-isopropylmalate dehydrogenase (354 aa).

G76–E87 contacts NAD(+). 4 residues coordinate substrate: R94, R104, R130, and D215. The Mg(2+) site is built by D215, D239, and D243. G273–N285 serves as a coordination point for NAD(+).

The protein belongs to the isocitrate and isopropylmalate dehydrogenases family. LeuB type 1 subfamily. In terms of assembly, homodimer. Mg(2+) serves as cofactor. The cofactor is Mn(2+).

It localises to the cytoplasm. The enzyme catalyses (2R,3S)-3-isopropylmalate + NAD(+) = 4-methyl-2-oxopentanoate + CO2 + NADH. Its pathway is amino-acid biosynthesis; L-leucine biosynthesis; L-leucine from 3-methyl-2-oxobutanoate: step 3/4. In terms of biological role, catalyzes the oxidation of 3-carboxy-2-hydroxy-4-methylpentanoate (3-isopropylmalate) to 3-carboxy-4-methyl-2-oxopentanoate. The product decarboxylates to 4-methyl-2 oxopentanoate. This chain is 3-isopropylmalate dehydrogenase, found in Bacillus cereus (strain ZK / E33L).